The following is a 353-amino-acid chain: Phospho-N-acetylmuramoyl-pentapeptide-transferase (353 aa).

10 helical membrane-spanning segments follow: residues 24 to 44 (LGFF…ILWA), 66 to 86 (TPTM…VLCA), 88 to 108 (LGNL…FVGF), 129 to 149 (FGML…KGLD), 160 to 180 (PLFE…FLST), 192 to 212 (GLAS…VYVA), 229 to 249 (VGEL…FLWY), 256 to 276 (VFMG…NAIV), 281 to 301 (ILLV…ILQV), and 330 to 350 (KVIV…LLSL).

Belongs to the glycosyltransferase 4 family. MraY subfamily. Requires Mg(2+) as cofactor.

The protein localises to the cell inner membrane. The enzyme catalyses UDP-N-acetyl-alpha-D-muramoyl-L-alanyl-gamma-D-glutamyl-meso-2,6-diaminopimeloyl-D-alanyl-D-alanine + di-trans,octa-cis-undecaprenyl phosphate = di-trans,octa-cis-undecaprenyl diphospho-N-acetyl-alpha-D-muramoyl-L-alanyl-D-glutamyl-meso-2,6-diaminopimeloyl-D-alanyl-D-alanine + UMP. It participates in cell wall biogenesis; peptidoglycan biosynthesis. Functionally, catalyzes the initial step of the lipid cycle reactions in the biosynthesis of the cell wall peptidoglycan: transfers peptidoglycan precursor phospho-MurNAc-pentapeptide from UDP-MurNAc-pentapeptide onto the lipid carrier undecaprenyl phosphate, yielding undecaprenyl-pyrophosphoryl-MurNAc-pentapeptide, known as lipid I. This chain is Phospho-N-acetylmuramoyl-pentapeptide-transferase, found in Helicobacter pylori (strain HPAG1).